The following is a 370-amino-acid chain: Early nodulin-like protein 1 (370 aa).

Residues Met1–Ala27 form the signal peptide. The Phytocyanin domain occupies Trp28–Ala129. An N-linked (GlcNAc...) asparagine glycan is attached at Asn58. Cys83 and Cys117 are disulfide-bonded. Positions Ser135 to Ser175 are enriched in low complexity. Residues Ser135–Ala347 form a disordered region. Residues Val176 to Leu194 show a composition bias toward polar residues. Composition is skewed to low complexity over residues Ser195 to Ala205 and Ser215 to Ala290. The span at Thr291 to Ser305 shows a compositional bias: pro residues. The segment covering Pro306 to Ser318 has biased composition (low complexity). The span at Thr319–Asn334 shows a compositional bias: polar residues. Asn334 carries N-linked (GlcNAc...) asparagine glycosylation. The GPI-anchor amidated asparagine moiety is linked to residue Asn345. A propeptide spans Ser346–Ala370 (removed in mature form).

This sequence belongs to the early nodulin-like (ENODL) family. As to expression, mostly expressed in stems, leaves and flowers, and, to a lower extent, in seedlings, roots and seeds.

The protein localises to the cell membrane. May act as a carbohydrate transporter. This chain is Early nodulin-like protein 1, found in Arabidopsis thaliana (Mouse-ear cress).